We begin with the raw amino-acid sequence, 161 residues long: Phosphopantetheine adenylyltransferase (161 aa).

Thr9 is a substrate binding site. Residues 9–10 and His17 contribute to the ATP site; that span reads TF. Residues Lys41, Leu73, and Arg87 each coordinate substrate. Residues 88 to 90, Glu98, and 123 to 129 contribute to the ATP site; these read GLR and YQFISGT.

This sequence belongs to the bacterial CoaD family. In terms of assembly, homohexamer. The cofactor is Mg(2+).

It localises to the cytoplasm. The enzyme catalyses (R)-4'-phosphopantetheine + ATP + H(+) = 3'-dephospho-CoA + diphosphate. It functions in the pathway cofactor biosynthesis; coenzyme A biosynthesis; CoA from (R)-pantothenate: step 4/5. Functionally, reversibly transfers an adenylyl group from ATP to 4'-phosphopantetheine, yielding dephospho-CoA (dPCoA) and pyrophosphate. The chain is Phosphopantetheine adenylyltransferase from Cupriavidus taiwanensis (strain DSM 17343 / BCRC 17206 / CCUG 44338 / CIP 107171 / LMG 19424 / R1) (Ralstonia taiwanensis (strain LMG 19424)).